Consider the following 499-residue polypeptide: Importin subunit alpha-8 (499 aa).

Residues Met-1–Met-57 enclose the IBB domain. ARM repeat units follow at residues Thr-101–Ser-141, Ser-144–Gly-183, Ala-186–Arg-226, Asp-229–Lys-268, Lys-271–Ala-310, Asp-313–Ala-352, Pro-354–Thr-393, and Gln-397–Gln-436.

Belongs to the importin alpha family. In terms of assembly, binds to importin subunit beta-1/KPNB1 via the IBB domain; this complex dissociates in the presence of RAN-GTP. Shows a limited binding to the RB1 nuclear localization signal (NLS), but not to the SV40, nor NPM1 NLSs. Interacts with RSL1D1. Expressed predominantly in ovary. Isoform 1 is the predominant form.

The protein localises to the nucleus. In terms of biological role, functions in nuclear protein import. This Mus musculus (Mouse) protein is Importin subunit alpha-8 (Kpna7).